The primary structure comprises 121 residues: UPF0102 protein BVU_1879 (121 aa).

This sequence belongs to the UPF0102 family.

This is UPF0102 protein BVU_1879 from Phocaeicola vulgatus (strain ATCC 8482 / DSM 1447 / JCM 5826 / CCUG 4940 / NBRC 14291 / NCTC 11154) (Bacteroides vulgatus).